A 1212-amino-acid polypeptide reads, in one-letter code: DNA-directed RNA polymerase subunit beta' (1212 aa).

Residues Cys60, Cys62, Cys75, and Cys78 each contribute to the Zn(2+) site. 3 residues coordinate Mg(2+): Asp450, Asp452, and Asp454. 4 residues coordinate Zn(2+): Cys819, Cys893, Cys900, and Cys903.

The protein belongs to the RNA polymerase beta' chain family. As to quaternary structure, the RNAP catalytic core consists of 2 alpha, 1 beta, 1 beta' and 1 omega subunit. When a sigma factor is associated with the core the holoenzyme is formed, which can initiate transcription. It depends on Mg(2+) as a cofactor. Requires Zn(2+) as cofactor.

The enzyme catalyses RNA(n) + a ribonucleoside 5'-triphosphate = RNA(n+1) + diphosphate. DNA-dependent RNA polymerase catalyzes the transcription of DNA into RNA using the four ribonucleoside triphosphates as substrates. This chain is DNA-directed RNA polymerase subunit beta', found in Streptococcus uberis (strain ATCC BAA-854 / 0140J).